We begin with the raw amino-acid sequence, 123 residues long: MAEELKRFLYKKLPSIEGLHAIVVSDRDGVPVIKVANENAPELALRPSFLSTFALATDQGSKLGLSKNKSIICYYDTCQVVQFNRLPLVVSFIASSDANTGLLLSLNEELGDLFEELQHAVEI.

This sequence belongs to the LAMTOR3 family. As to quaternary structure, part of the Ragulator complex composed of lamtor1, lamtor2, lamtor3, lamtor4 and lamtor5. The Ragulator complex interacts with slc38a9; the probable amino acid sensor. Component of the lysosomal folliculin complex (LFC).

It is found in the late endosome membrane. In terms of biological role, as part of the Ragulator complex it is involved in amino acid sensing and activation of mTORC1, a signaling complex promoting cell growth in response to growth factors, energy levels, and amino acids. Activated by amino acids through a mechanism involving the lysosomal V-ATPase, the Ragulator plays a dual role for the small GTPases Rag (RagA/RRAGA, RagB/RRAGB, RagC/RRAGC and/or RagD/RRAGD): it (1) acts as a guanine nucleotide exchange factor (GEF), activating the small GTPases Rag and (2) mediates recruitment of Rag GTPases to the lysosome membrane. Activated Ragulator and Rag GTPases function as a scaffold recruiting mTORC1 to lysosomes where it is in turn activated. The protein is Ragulator complex protein LAMTOR3-B (lamtor3-b) of Xenopus laevis (African clawed frog).